We begin with the raw amino-acid sequence, 335 residues long: Pyridoxal 5'-phosphate synthase subunit PdxS (335 aa).

D-ribose 5-phosphate is bound at residue aspartate 30. Residue lysine 87 is the Schiff-base intermediate with D-ribose 5-phosphate of the active site. Glycine 159 serves as a coordination point for D-ribose 5-phosphate. D-glyceraldehyde 3-phosphate is bound at residue arginine 171. Residues glycine 257 and 278–279 (GS) contribute to the D-ribose 5-phosphate site.

The protein belongs to the PdxS/SNZ family. As to quaternary structure, in the presence of PdxT, forms a dodecamer of heterodimers.

It catalyses the reaction aldehydo-D-ribose 5-phosphate + D-glyceraldehyde 3-phosphate + L-glutamine = pyridoxal 5'-phosphate + L-glutamate + phosphate + 3 H2O + H(+). It participates in cofactor biosynthesis; pyridoxal 5'-phosphate biosynthesis. Functionally, catalyzes the formation of pyridoxal 5'-phosphate from ribose 5-phosphate (RBP), glyceraldehyde 3-phosphate (G3P) and ammonia. The ammonia is provided by the PdxT subunit. Can also use ribulose 5-phosphate and dihydroxyacetone phosphate as substrates, resulting from enzyme-catalyzed isomerization of RBP and G3P, respectively. The sequence is that of Pyridoxal 5'-phosphate synthase subunit PdxS from Thermococcus kodakarensis (strain ATCC BAA-918 / JCM 12380 / KOD1) (Pyrococcus kodakaraensis (strain KOD1)).